We begin with the raw amino-acid sequence, 557 residues long: Nucleolin 1 (557 aa).

3 disordered regions span residues 1–297, 376–398, and 474–557; these read MGKS…GGSK, GERG…GDGG, and LVVD…FGDE. Positions 49-63 are enriched in basic and acidic residues; the sequence is QKEKAVKKVPKKVES. Composition is skewed to acidic residues over residues 64-74, 91-101, and 124-135; these read SDDSDSESEEE, ESSDDSSSDDE, and SSSDDDSSDEEV. Low complexity predominate over residues 174–184; that stretch reads AKIAKPAAKDS. The segment covering 186-197 has biased composition (acidic residues); sequence SSDDDSDEDSED. The segment covering 203 to 217 has biased composition (low complexity); it reads KKAAPAAAKAASSSD. Over residues 218–229 the composition is skewed to acidic residues; that stretch reads SSDEDSDEESED. The segment covering 230 to 247 has biased composition (basic and acidic residues); it reads EKPAQKKADTKASKKSSS. The span at 249–263 shows a compositional bias: acidic residues; that stretch reads ESSESEEDESEDEEE. Residues 264-281 show a composition bias toward basic and acidic residues; the sequence is TPKKKSSDVEMVDAEKSS. In terms of domain architecture, RRM 1 spans 297-374; that stretch reads KTLFAANLSF…REIRLDIAQE (78 aa). The RRM 2 domain occupies 401 to 481; the sequence is KKIFVKGFDA…FYLVVDEPRP (81 aa). Positions 485–503 are enriched in gly residues; that stretch reads SSGGGGFGRGNGRFGSGGG.

As to quaternary structure, interacts with THAL in the nucleus. Expressed in roots, leaves, shoots and flowers.

It is found in the nucleus. It localises to the nucleolus. Involved in pre-rRNA processing and ribosome assembly. Is associated with intranucleolar chromatin and pre-ribosomal particles and plays a role in controlling activation and repression of a specific subset of rRNA genes located in distinctive nucleolar organizer regions. Binds specifically rDNA chromatin and may be required to maintain rDNA chromatin structure, but is probably not required for the overall histone methylation status of 45S rRNA genes. Involved in leaf polarity establishment by functioning cooperatively with AS1 to repress abaxial genes ARF3, ARF4, KAN1, KAN2, YAB1 and YAB5, and the knox homeobox genes KNAT1, KNAT2, KNAT6, and STM to promote adaxial development in leaf primordia at shoot apical meristems at high temperatures. The sequence is that of Nucleolin 1 from Arabidopsis thaliana (Mouse-ear cress).